A 297-amino-acid chain; its full sequence is Acetyl-coenzyme A carboxylase carboxyl transferase subunit beta (297 aa).

The 270-residue stretch at L27–V296 folds into the CoA carboxyltransferase N-terminal domain. Zn(2+) contacts are provided by C31, C34, C50, and C53. The C4-type zinc-finger motif lies at C31–C53.

Belongs to the AccD/PCCB family. Acetyl-CoA carboxylase is a heterohexamer composed of biotin carboxyl carrier protein (AccB), biotin carboxylase (AccC) and two subunits each of ACCase subunit alpha (AccA) and ACCase subunit beta (AccD). It depends on Zn(2+) as a cofactor.

The protein resides in the cytoplasm. It carries out the reaction N(6)-carboxybiotinyl-L-lysyl-[protein] + acetyl-CoA = N(6)-biotinyl-L-lysyl-[protein] + malonyl-CoA. It participates in lipid metabolism; malonyl-CoA biosynthesis; malonyl-CoA from acetyl-CoA: step 1/1. In terms of biological role, component of the acetyl coenzyme A carboxylase (ACC) complex. Biotin carboxylase (BC) catalyzes the carboxylation of biotin on its carrier protein (BCCP) and then the CO(2) group is transferred by the transcarboxylase to acetyl-CoA to form malonyl-CoA. The polypeptide is Acetyl-coenzyme A carboxylase carboxyl transferase subunit beta (Pseudomonas putida (strain W619)).